The chain runs to 589 residues: Ubiquilin-1 (589 aa).

Gly residues predominate over residues 1–11 (MAESGESGGPP). Disordered regions lie at residues 1–35 (MAESGESGGPPGSQDSAAGAEGAGAPAAAASAEPK) and 110–145 (NRPQDHSAQQTNTAGSNVTTSSTPNSNSTSGSATSN). Alanine 2 carries the post-translational modification N-acetylalanine. The segment covering 12–35 (GSQDSAAGAEGAGAPAAAASAEPK) has biased composition (low complexity). Positions 37–111 (MKVTVKTPKE…VHLVIKTQNR (75 aa)) constitute a Ubiquitin-like domain. Residues 110–124 (NRPQDHSAQQTNTAG) are compositionally biased toward polar residues. Residues 125 to 145 (SNVTTSSTPNSNSTSGSATSN) show a composition bias toward low complexity. Residues 178–428 (QLLSNPEMMV…LNNPLFAGNP (251 aa)) form an interaction with UBXN4 region. 2 consecutive STI1 domains span residues 182–210 (NPEMMVQIMENPFVQSMLSNPDLMRQLIM) and 212–251 (NPQMQQLIQRNPEISHMLNNPDIMRQTLELARNPAMMQEM). The tract at residues 295–371 (PFASLVSNTS…NLVPGVGASM (77 aa)) is disordered. Residues 299-313 (LVSNTSSGEGSQPSR) are compositionally biased toward polar residues. Over residues 327-360 (QTSQSSSASSGTASTVGGTTGSTASGTSGQSTTA) the composition is skewed to low complexity. STI1 domains follow at residues 387 to 434 (NPQL…QEQM) and 438 to 470 (LPTFLQQMQNPDTLSAMSNPRAMQALLQIQQGL). Positions 488-520 (LGALGSTGGSSGTNGSNATPSENTSPTAGTTEP) are disordered. Over residues 489–499 (GALGSTGGSSG) the composition is skewed to gly residues. A compositionally biased stretch (polar residues) spans 509 to 520 (ENTSPTAGTTEP). The UBA domain maps to 546–586 (RFQQQLEQLSAMGFLNREANLQALIATGGDINAAIERLLGS).

As to quaternary structure, monomer and homodimer. Heterodimer with UBQLN2. Binds CD47, NBL1, GABRA1, GABRA2, GABRA3, GABRA6, GABRB1, GABRB2 and GABRB3. Binds UBE3A, BTRC, P4HB and MTOR. Interacts with the proteasome 19S subunit. Interacts (via ubiquitin-like domain) with TREX1; the interaction is direct and may control TREX1 subcellular location. Forms a complex with UBXN4 and VCP. Interacts (via UBA domain) with UBQLN4 (via ubiquitin-like domain). Found in a complex with UBQLN2 and MAP1LC3A/B/C. The monomeric form interacts with PSEN2. The monomeric form interacts with PSEN1. Interacts with ORAI1. Interacts (via UBA domain) with TICAM1. Interacts with EPS15. Interacts (via UBA domain) with UBA52 and (via ubiquitin-like domain) with PSMD3 and PSMD4. Interacts with HERPUD1. Interacts with MAP1LC3A/B/C in the presence of UBQLN4. Interacts (via ubiquitin-like domain) with EPS15 (via UIM domains) and both the ubiquitinated and non-ubiquitinated forms can interact with EPS15. Interacts (via ubiquitin-like domain) with EPS15L1, HGS (via UIM domain) and STAM2 (via UIM domain). Interacts with BCL2L10/BCL-B; in the cytoplasm. Monomeric form interacts with PSEN1. Post-translationally, degraded during both macroautophagy and during chaperone-mediated autophagy (CMA). Phosphorylated. In terms of processing, ubiquitinated. In terms of tissue distribution, brain (at protein level). Ubiquitous. Highly expressed throughout the brain; detected in neurons and in neuropathological lesions, such as neurofibrillary tangles and Lewy bodies. Highly expressed in heart, placenta, pancreas, lung, liver, skeletal muscle and kidney.

It localises to the cytoplasm. The protein localises to the nucleus. Its subcellular location is the endoplasmic reticulum. It is found in the cytoplasmic vesicle. The protein resides in the autophagosome. It localises to the cell membrane. In terms of biological role, plays an important role in the regulation of different protein degradation mechanisms and pathways including ubiquitin-proteasome system (UPS), autophagy and endoplasmic reticulum-associated protein degradation (ERAD) pathway. Mediates the proteasomal targeting of misfolded or accumulated proteins for degradation by binding (via UBA domain) to their polyubiquitin chains and by interacting (via ubiquitin-like domain) with the subunits of the proteasome. Plays a role in the ERAD pathway via its interaction with ER-localized proteins UBXN4, VCP and HERPUD1 and may form a link between the polyubiquitinated ERAD substrates and the proteasome. Involved in the regulation of macroautophagy and autophagosome formation; required for maturation of autophagy-related protein LC3 from the cytosolic form LC3-I to the membrane-bound form LC3-II and may assist in the maturation of autophagosomes to autolysosomes by mediating autophagosome-lysosome fusion. Negatively regulates the TICAM1/TRIF-dependent toll-like receptor signaling pathway by decreasing the abundance of TICAM1 via the autophagic pathway. Promotes the ubiquitination and lysosomal degradation of ORAI1, consequently down-regulating the ORAI1-mediated Ca2+ mobilization. Suppresses the maturation and proteasomal degradation of amyloid beta A4 protein (A4) by stimulating the lysine 63 (K63)-linked polyubiquitination. Delays the maturation of A4 by sequestering it in the Golgi apparatus and preventing its transport to the cell surface for subsequent processing. Ubiquitinates BCL2L10 and thereby stabilizes protein abundance. Plays a role in unfolded protein response (UPR) by attenuating the induction of UPR-inducible genes, DDTI3/CHOP, HSPA5 and PDIA2 during ER stress. Plays a key role in the regulation of the levels of PSEN1 by targeting its accumulation to aggresomes which may then be removed from cells by autophagocytosis. Its function is as follows. Plays a role in unfolded protein response (UPR) by attenuating the induction of UPR-inducible genes, DDTI3/CHOP, HSPA5 and PDIA2 during ER stress. The protein is Ubiquilin-1 (UBQLN1) of Homo sapiens (Human).